A 184-amino-acid chain; its full sequence is ESX-1 secretion-associated protein EspD (184 aa).

Residues 33–56 (IGVGSAATPDTGPDLDNAHGQAET) form a disordered region.

The protein resides in the secreted. In terms of biological role, required for ESX-1 function. Required for the maintenance of adequate cellular levels of both EspA and EspC. Facilitates EsxA secretion. The polypeptide is ESX-1 secretion-associated protein EspD (Mycobacterium tuberculosis (strain CDC 1551 / Oshkosh)).